The primary structure comprises 477 residues: Glutamate--tRNA ligase 2 (477 aa).

Residues 9-19 (PSPTGFLHIGG) carry the 'HIGH' region motif. A 'KMSKS' region motif is present at residues 238–242 (KLSKR). An ATP-binding site is contributed by lysine 241.

The protein belongs to the class-I aminoacyl-tRNA synthetase family. Glutamate--tRNA ligase type 1 subfamily. In terms of assembly, monomer.

It is found in the cytoplasm. The enzyme catalyses tRNA(Glu) + L-glutamate + ATP = L-glutamyl-tRNA(Glu) + AMP + diphosphate. Functionally, catalyzes the attachment of glutamate to tRNA(Glu) in a two-step reaction: glutamate is first activated by ATP to form Glu-AMP and then transferred to the acceptor end of tRNA(Glu). In Paramagnetospirillum magneticum (strain ATCC 700264 / AMB-1) (Magnetospirillum magneticum), this protein is Glutamate--tRNA ligase 2.